A 156-amino-acid chain; its full sequence is uncharacterized protein (156 aa).

A run of 5 helical transmembrane segments spans residues 6 to 26 (LIVLISFLIFYLSIFLAPYFA), 34 to 54 (FWKFISICLYAVYSLICHQMP), 68 to 88 (CARCFGIYTGVLVGMIIYPFI), 100 to 120 (WYLIIALIPMAVDGTTQLIGL), and 129 to 149 (FITGFIAGFTVVFYILPIFFE).

It is found in the cell membrane. This is an uncharacterized protein from Methanocaldococcus jannaschii (strain ATCC 43067 / DSM 2661 / JAL-1 / JCM 10045 / NBRC 100440) (Methanococcus jannaschii).